Here is a 235-residue protein sequence, read N- to C-terminus: Probable septum site-determining protein MinC (235 aa).

The disordered stretch occupies residues 104-125 (KAVRPAPVEPATPSEPPQNANP). Residues 110-119 (PVEPATPSEP) are compositionally biased toward pro residues.

The protein belongs to the MinC family. In terms of assembly, interacts with MinD and FtsZ.

Functionally, cell division inhibitor that blocks the formation of polar Z ring septums. Rapidly oscillates between the poles of the cell to destabilize FtsZ filaments that have formed before they mature into polar Z rings. Prevents FtsZ polymerization. This Salmonella enteritidis PT4 (strain P125109) protein is Probable septum site-determining protein MinC.